We begin with the raw amino-acid sequence, 287 residues long: Small ribosomal subunit biogenesis GTPase RsgA (287 aa).

A CP-type G domain is found at Ile61–Leu218. Residues Asn110–Asp113 and Gly161–Thr169 contribute to the GTP site. 4 residues coordinate Zn(2+): Cys242, Cys247, His249, and Cys255.

It belongs to the TRAFAC class YlqF/YawG GTPase family. RsgA subfamily. Monomer. Associates with 30S ribosomal subunit, binds 16S rRNA. The cofactor is Zn(2+).

The protein resides in the cytoplasm. In terms of biological role, one of several proteins that assist in the late maturation steps of the functional core of the 30S ribosomal subunit. Helps release RbfA from mature subunits. May play a role in the assembly of ribosomal proteins into the subunit. Circularly permuted GTPase that catalyzes slow GTP hydrolysis, GTPase activity is stimulated by the 30S ribosomal subunit. The sequence is that of Small ribosomal subunit biogenesis GTPase RsgA from Clostridium kluyveri (strain NBRC 12016).